We begin with the raw amino-acid sequence, 430 residues long: Potassium channel subfamily K member 12 (430 aa).

Topologically, residues 1-38 (MSSRSPRPPPRRSRRRLPRPSCCCCCCRRSHLNEDTGR) are cytoplasmic. The tract at residues 11–16 (RRSRRR) is ER retention/retrieval signal. Residues 39 to 59 (FVLLAALIGLYLVAGATVFSA) traverse the membrane as a helical segment. N78 is a glycosylation site (N-linked (GlcNAc...) asparagine). An intramembrane region (pore-forming) is located at residues 114-134 (WDFPGAFYFVGTVVSTIGFGM). The K(+) site is built by T129, I130, and G131. Residues 129 to 134 (TIGFGM) are selectivity filter 1. Residues 145–165 (FLIAYGLFGCAGTILFFNLFL) form a helical membrane-spanning segment. Residues 166-212 (ERIISLLAFIMRACRERQLRRSGLLPATFRRGSALSEADSLAGWKPS) lie on the Cytoplasmic side of the membrane. Residues 213–233 (VYHVLLILGLFAVLLSCCASA) traverse the membrane as a helical segment. The pore-forming intramembrane region spans 243–263 (YVDSLYFCFVTFSTIGFGDLV). T256, I257, G258, and F259 together coordinate K(+). Residues 256–261 (TIGFGD) are selectivity filter 2. A helical membrane pass occupies residues 282–302 (LFILLGVCCIYSLFNVISILI). At 303–430 (KQVLNWMLRK…NRLAETSASR (128 aa)) the chain is on the cytoplasmic side.

This sequence belongs to the two pore domain potassium channel (TC 1.A.1.8) family. As to quaternary structure, homodimer. Heterodimer with KCNK13.

It is found in the cell membrane. The protein localises to the endoplasmic reticulum membrane. It catalyses the reaction K(+)(in) = K(+)(out). Its function is as follows. K(+) channel subunit that may homo- and heterodimerize to form functional channels with distinct regulatory and gating properties. Can heterodimerize with KCNK13 subunit to conduct K(+) outward rectifying currents at the plasma membrane. The homodimers are mainly retained in the endoplasmic reticulum compartment and may be targeted to the cell surface upon phosphorylation or other activation signals yet to be elucidated. This chain is Potassium channel subfamily K member 12, found in Homo sapiens (Human).